The sequence spans 614 residues: Translation initiation factor IF-2 (614 aa).

Residues 115-283 form the tr-type G domain; the sequence is ARAPIVTIMG…ILLIAELNNY (169 aa). Residues 124 to 131 form a G1 region; it reads GHVDHGKT. 124-131 is a binding site for GTP; sequence GHVDHGKT. The G2 stretch occupies residues 149–153; that stretch reads GITQH. The G3 stretch occupies residues 170–173; that stretch reads DTPG. GTP is bound by residues 170–174 and 224–227; these read DTPGH and NKMD. Positions 224–227 are G4; sequence NKMD. Residues 260–262 form a G5 region; that stretch reads SAL.

This sequence belongs to the TRAFAC class translation factor GTPase superfamily. Classic translation factor GTPase family. IF-2 subfamily.

The protein localises to the cytoplasm. Functionally, one of the essential components for the initiation of protein synthesis. Protects formylmethionyl-tRNA from spontaneous hydrolysis and promotes its binding to the 30S ribosomal subunits. Also involved in the hydrolysis of GTP during the formation of the 70S ribosomal complex. In Ureaplasma parvum serovar 3 (strain ATCC 27815 / 27 / NCTC 11736), this protein is Translation initiation factor IF-2.